Here is a 208-residue protein sequence, read N- to C-terminus: Imidazoleglycerol-phosphate dehydratase (208 aa).

The protein belongs to the imidazoleglycerol-phosphate dehydratase family.

The protein localises to the cytoplasm. It carries out the reaction D-erythro-1-(imidazol-4-yl)glycerol 3-phosphate = 3-(imidazol-4-yl)-2-oxopropyl phosphate + H2O. It participates in amino-acid biosynthesis; L-histidine biosynthesis; L-histidine from 5-phospho-alpha-D-ribose 1-diphosphate: step 6/9. This is Imidazoleglycerol-phosphate dehydratase from Hyphomonas neptunium (strain ATCC 15444).